The chain runs to 400 residues: Large envelope protein (400 aa).

At M1 the chain carries N-acetylmethionine. Disordered stretches follow at residues 1 to 20 (MGGW…SVPN) and 85 to 114 (LTPV…PLRD). The N-myristoyl glycine; by host moiety is linked to residue G2. The tract at residues 2–119 (GGWSSKPRKG…PPLRDSHPQA (118 aa)) is pre-S1. A pre-S region spans residues 2 to 174 (GGWSSKPRKG…SARTGDPVTN (173 aa)). At 2-181 (GGWSSKPRKG…VTNMENITSG (180 aa)) the chain is on the virion surface; in external conformation side. Residues 2–253 (GGWSSKPRKG…PGYRWMCLRR (252 aa)) lie on the Intravirion; in internal conformation side of the membrane. The N-linked (GlcNAc...) asparagine glycan is linked to W4. Residues 97-106 (ANRQSGRQPT) are compositionally biased toward polar residues. The pre-S2 stretch occupies residues 120–174 (MQWNSTAFHQALQDPRVRGLYFPAGGSSSGTVNPAPNIASHISSISARTGDPVTN). Residues 182-202 (FLGPLPVLQAGFFLLTRILTI) form a helical membrane-spanning segment. Residues 203 to 253 (PQSLDSWWTSLNFLGGSPVCLGQNSRSPTSNHSPTSCPPICPGYRWMCLRR) are Intravirion; in external conformation-facing. A helical membrane pass occupies residues 254-274 (FIIFLFILLLCLIFLLVLLDY). Residues 275-348 (QGMLPVCPLI…WASVRFSWLS (74 aa)) lie on the Virion surface side of the membrane. Residue N320 is glycosylated (N-linked (GlcNAc...) asparagine; by host). The helical transmembrane segment at 349–369 (LLVPFVQWFVGLSPTVWLSAI) threads the bilayer. The Intravirion segment spans residues 370 to 375 (WMMWYW). Residues 376 to 398 (GPSLYSIVSSFIPLLPIFFCLWV) traverse the membrane as a helical segment. Residues 399–400 (YI) are Virion surface-facing.

The protein belongs to the orthohepadnavirus major surface antigen family. In terms of assembly, in its internal form (Li-HBsAg), interacts with the capsid protein and with the isoform S. Interacts with host chaperone CANX. Associates with host chaperone CANX through its pre-S2 N glycan; this association may be essential for isoform M proper secretion. As to quaternary structure, interacts with isoform L. Interacts with the antigens of satellite virus HDV (HDVAgs); this interaction is required for encapsidation of HDV genomic RNA. Isoform M is N-terminally acetylated by host at a ratio of 90%, and N-glycosylated by host at the pre-S2 region. Post-translationally, myristoylated.

It is found in the virion membrane. Its function is as follows. The large envelope protein exists in two topological conformations, one which is termed 'external' or Le-HBsAg and the other 'internal' or Li-HBsAg. In its external conformation the protein attaches the virus to cell receptors and thereby initiating infection. This interaction determines the species specificity and liver tropism. This attachment induces virion internalization predominantly through caveolin-mediated endocytosis. The large envelope protein also assures fusion between virion membrane and endosomal membrane. In its internal conformation the protein plays a role in virion morphogenesis and mediates the contact with the nucleocapsid like a matrix protein. In terms of biological role, the middle envelope protein plays an important role in the budding of the virion. It is involved in the induction of budding in a nucleocapsid independent way. In this process the majority of envelope proteins bud to form subviral lipoprotein particles of 22 nm of diameter that do not contain a nucleocapsid. This Homo sapiens (Human) protein is Large envelope protein.